We begin with the raw amino-acid sequence, 366 residues long: tRNA 2-selenouridine synthase (366 aa).

Residues 12-135 (FLNDVPMMDA…MRTFLLDTLH (124 aa)) enclose the Rhodanese domain. Catalysis depends on Cys95, which acts as the S-selanylcysteine intermediate.

Belongs to the SelU family. As to quaternary structure, monomer.

It catalyses the reaction 5-methylaminomethyl-2-thiouridine(34) in tRNA + selenophosphate + (2E)-geranyl diphosphate + H2O + H(+) = 5-methylaminomethyl-2-selenouridine(34) in tRNA + (2E)-thiogeraniol + phosphate + diphosphate. The enzyme catalyses 5-methylaminomethyl-2-thiouridine(34) in tRNA + (2E)-geranyl diphosphate = 5-methylaminomethyl-S-(2E)-geranyl-thiouridine(34) in tRNA + diphosphate. It carries out the reaction 5-methylaminomethyl-S-(2E)-geranyl-thiouridine(34) in tRNA + selenophosphate + H(+) = 5-methylaminomethyl-2-(Se-phospho)selenouridine(34) in tRNA + (2E)-thiogeraniol. The catalysed reaction is 5-methylaminomethyl-2-(Se-phospho)selenouridine(34) in tRNA + H2O = 5-methylaminomethyl-2-selenouridine(34) in tRNA + phosphate. In terms of biological role, involved in the post-transcriptional modification of the uridine at the wobble position (U34) of tRNA(Lys), tRNA(Glu) and tRNA(Gln). Catalyzes the conversion of 2-thiouridine (S2U-RNA) to 2-selenouridine (Se2U-RNA). Acts in a two-step process involving geranylation of 2-thiouridine (S2U) to S-geranyl-2-thiouridine (geS2U) and subsequent selenation of the latter derivative to 2-selenouridine (Se2U) in the tRNA chain. This Pseudomonas syringae pv. tomato (strain ATCC BAA-871 / DC3000) protein is tRNA 2-selenouridine synthase.